Consider the following 161-residue polypeptide: Globin CTT-VIIB-3 (161 aa).

Residues 1 to 16 (MKFFAVLALCIVGAIA) form the signal peptide. In terms of domain architecture, Globin spans 18 to 161 (PLTADEASLV…NTYAIVVPRL (144 aa)). Residues H76 and H111 each coordinate heme b.

It belongs to the globin family. In terms of assembly, homodimer.

This is Globin CTT-VIIB-3 (CTT-7B3) from Chironomus thummi thummi (Midge).